A 160-amino-acid chain; its full sequence is S-ribosylhomocysteine lyase (160 aa).

Fe cation contacts are provided by histidine 57, histidine 61, and cysteine 127.

The protein belongs to the LuxS family. As to quaternary structure, homodimer. Fe cation is required as a cofactor.

The catalysed reaction is S-(5-deoxy-D-ribos-5-yl)-L-homocysteine = (S)-4,5-dihydroxypentane-2,3-dione + L-homocysteine. Its function is as follows. Involved in the synthesis of autoinducer 2 (AI-2) which is secreted by bacteria and is used to communicate both the cell density and the metabolic potential of the environment. The regulation of gene expression in response to changes in cell density is called quorum sensing. Catalyzes the transformation of S-ribosylhomocysteine (RHC) to homocysteine (HC) and 4,5-dihydroxy-2,3-pentadione (DPD). This chain is S-ribosylhomocysteine lyase, found in Streptococcus sanguinis (strain SK36).